The primary structure comprises 227 residues: Orotidine 5'-phosphate decarboxylase (227 aa).

Substrate-binding positions include aspartate 8, lysine 30, 58 to 67, threonine 117, arginine 177, glutamine 186, glycine 206, and arginine 207; that span reads DLKVHDIPNT. Lysine 60 serves as the catalytic Proton donor.

This sequence belongs to the OMP decarboxylase family. Type 1 subfamily. In terms of assembly, homodimer.

The catalysed reaction is orotidine 5'-phosphate + H(+) = UMP + CO2. It participates in pyrimidine metabolism; UMP biosynthesis via de novo pathway; UMP from orotate: step 2/2. In terms of biological role, catalyzes the decarboxylation of orotidine 5'-monophosphate (OMP) to uridine 5'-monophosphate (UMP). The polypeptide is Orotidine 5'-phosphate decarboxylase (Campylobacter fetus subsp. fetus (strain 82-40)).